A 77-amino-acid chain; its full sequence is U8-lycotoxin-Ls1m (77 aa).

Positions 1–20 (MKLMIFTGLFLFAIVSLIEA) are cleaved as a signal peptide. Positions 21 to 26 (QAENEK) are excised as a propeptide.

It belongs to the neurotoxin 19 (CSTX) family. 08 (U8-Lctx) subfamily. Post-translationally, contains 4 disulfide bonds. As to expression, expressed by the venom gland.

Its subcellular location is the secreted. The protein is U8-lycotoxin-Ls1m of Lycosa singoriensis (Wolf spider).